Consider the following 442-residue polypeptide: Proline--tRNA ligase (442 aa).

This sequence belongs to the class-II aminoacyl-tRNA synthetase family. ProS type 2 subfamily. In terms of assembly, homodimer.

It localises to the cytoplasm. The enzyme catalyses tRNA(Pro) + L-proline + ATP = L-prolyl-tRNA(Pro) + AMP + diphosphate. Functionally, catalyzes the attachment of proline to tRNA(Pro) in a two-step reaction: proline is first activated by ATP to form Pro-AMP and then transferred to the acceptor end of tRNA(Pro). This Brucella canis (strain ATCC 23365 / NCTC 10854 / RM-666) protein is Proline--tRNA ligase.